Consider the following 397-residue polypeptide: G2/mitotic-specific cyclin-B1 (397 aa).

It belongs to the cyclin family. Cyclin AB subfamily. As to quaternary structure, interacts with the cdc2 protein kinase to form a serine/threonine kinase holoenzyme complex also known as maturation promoting factor (MPF). The cyclin subunit imparts substrate specificity to the complex. When not in a complex with cdc2, interacts with spdya. Interacts with nap1l1. Interacts with nanos1.

The protein resides in the cytoplasm. It is found in the cytoskeleton. The protein localises to the microtubule organizing center. Its subcellular location is the centrosome. It localises to the nucleus. In terms of biological role, essential for the control of the cell cycle at the G2/M (mitosis) transition. This Xenopus laevis (African clawed frog) protein is G2/mitotic-specific cyclin-B1 (ccnb1).